The sequence spans 899 residues: MELVSFGVEKLWDRLSQEYDQFKGVEDQVTELKSNLNLLKSFLKDADAKKHISEMVRHCVEEIKDIVYDTEDIIETFILKEKVEMKRGIMKRIKRFASTIMDRRELASDIGGISKRISKVIQDMQSFGVQQIITDGSRSSHPLQERQREMRHTFSRDSENDFVGMEANVKKLVGYLVEKDDYQIVSLTGMGGLGKTTLARQVFNHDVVKDRFDGFAWVSVSQEFTRISVWQTILQNLTSKERKDEIQNMKEADLHDDLFRLLESSKTLIVLDDIWKEEDWDLIKPIFPPKKGWKVLLTSRTESIAMRGDTTYISFKPKCLSIPDSWTLFQSIAMPRKDTSEFKVDEEMENMGKKMIKHCGGLSLAVKVLGGLLAAKYTLHDWKRLSENIGSHIVERTSGNNSSIDHVLSVSFEELPNYLKHCFLYLAHFPEDHEIDVEKLHYYWAAEGISERRRYDGETIRDTGDSYIEELVRRNMVISERDVMTSRFETCRLHDMMREICLFKAKEENFLQIVSNHSPTSNPQTLGASRRFVLHNPTTLHVERYKNNPKLRSLVVVYDDIGNRRWMLSGSIFTRVKLLRVLDLVQAKFKGGKLPSDIGKLIHLRYLSLKDAKVSHLPSSLRNLVLLIYLDIRTDFTDIFVPNVFMGMRELRYLELPRFMHEKTKLELSNLEKLEALENFSTKSSSLEDLRGMVRLRTLVIILSEGTSLQTLSASVCGLRHLENFKIMENAGVNRMGEERMVLDFTYLKKLTLSIEMPRLPKIQHLPSHLTVLDLSYCCLEEDPMPILEKLLELKDLSLDYLSFSGRKMVCSAGGFPQLRKLALDEQEEWEEWIVEEGSMSRLHTLSIWSSTLKELPDGLRFIYSLKNLIMGKSWMERLSERGEEFYKVQNIPFIKFSS.

The stretch at 13 to 50 forms a coiled coil; it reads DRLSQEYDQFKGVEDQVTELKSNLNLLKSFLKDADAKK. The NB-ARC domain maps to 143–455; sequence LQERQREMRH…AEGISERRRY (313 aa). 189–196 serves as a coordination point for ATP; it reads GMGGLGKT.

It belongs to the disease resistance NB-LRR family.

Its function is as follows. Potential disease resistance protein. This chain is Probable disease resistance protein RXW24L (RXW24L), found in Arabidopsis thaliana (Mouse-ear cress).